Consider the following 1193-residue polypeptide: Laminin subunit gamma-2 (1193 aa).

Positions 1 to 21 (MPALWLGCCLCFSLLLPAARA) are cleaved as a signal peptide. Cystine bridges form between Cys-28/Cys-37, Cys-30/Cys-53, Cys-56/Cys-65, Cys-68/Cys-81, Cys-84/Cys-96, Cys-86/Cys-102, Cys-104/Cys-113, Cys-116/Cys-128, Cys-139/Cys-150, Cys-141/Cys-155, Cys-157/Cys-166, and Cys-169/Cys-184. Laminin EGF-like domains lie at 28-83 (CDCN…RCLP), 84-130 (CNCN…GCTQ), and 139-186 (CDCD…GCTQ). Positions 187-196 (CFCYGHSASC) constitute a Laminin EGF-like 4; first part domain. In terms of domain architecture, Laminin IV type A spans 213–381 (QDVDGWKAVQ…SGAPAPWVEQ (169 aa)). N-linked (GlcNAc...) asparagine glycosylation is found at Asn-342 and Asn-362. The region spanning 382-415 (CICPVGYKGQFCQDCASGYKRDSARLGPFGTCIP) is the Laminin EGF-like 4; second part domain. 3 Laminin EGF-like domains span residues 416–461 (CNCQ…SCKP), 462–516 (CPCH…PCQP), and 517–572 (CQCN…KCRA). 11 disulfides stabilise this stretch: Cys-462–Cys-470, Cys-464–Cys-481, Cys-484–Cys-493, Cys-496–Cys-514, Cys-517–Cys-531, Cys-519–Cys-538, Cys-541–Cys-550, Cys-553–Cys-570, Cys-573–Cys-585, Cys-575–Cys-591, and Cys-593–Cys-602. A Laminin EGF-like 8; truncated domain is found at 573 to 602 (CNCNPMGSEPVGCRSDGTCVCKPGFGGPNC). Residues 603 to 1193 (EHGAFSCPAC…CYNTQALEQQ (591 aa)) form a domain II and I region. The stretch at 611–718 (ACYNQVKIQM…GSQYQNRVRD (108 aa)) forms a coiled coil. Ser-803 and Ser-805 each carry an O-linked (Xyl...) (chondroitin sulfate) serine glycan. Coiled coils occupy residues 811 to 1076 (AVVQ…AVQM) and 1117 to 1193 (EEGL…LEQQ). N-linked (GlcNAc...) asparagine glycosylation is found at Asn-942 and Asn-1033.

As to quaternary structure, laminin is a complex glycoprotein, consisting of three different polypeptide chains (alpha, beta, gamma), which are bound to each other by disulfide bonds into a cross-shaped molecule comprising one long and three short arms with globules at each end. Gamma-2 is a subunit of laminin-5 (laminin-332 or epiligrin/kalinin/nicein). In terms of processing, O-glycosylated; contains chondroitin sulfate (CS). CS attachment is on either Ser-803 or Ser-805. The large variant is expressed only in specific epithelial cells of embryonic and neonatal tissues. In 17-week old embryo the small variant is found in cerebral cortex, lung, and distal tubes of kidney, but not in epithelia except for distal tubuli.

The protein localises to the secreted. The protein resides in the extracellular space. It is found in the extracellular matrix. Its subcellular location is the basement membrane. In terms of biological role, binding to cells via a high affinity receptor, laminin is thought to mediate the attachment, migration and organization of cells into tissues during embryonic development by interacting with other extracellular matrix components. Ladsin exerts cell-scattering activity toward a wide variety of cells, including epithelial, endothelial, and fibroblastic cells. The sequence is that of Laminin subunit gamma-2 (LAMC2) from Homo sapiens (Human).